Reading from the N-terminus, the 484-residue chain is Solute carrier family 40 member 1 (484 aa).

11 helical membrane passes run 58–78 (LLTA…GPIV), 94–114 (WLLL…ALLV), 123–143 (GFPA…LAAL), 189–209 (VLSG…ALAA), 212–232 (LAAV…FPAL), 279–299 (VVLP…FGTL), 308–328 (GIPA…GIAA), 346–366 (LWSI…VWAG), 377–397 (LMGG…AVMQ), 413–433 (GVQN…GIIV), and 442–462 (LIVL…MHVY).

Belongs to the ferroportin (FP) (TC 2.A.100) family. SLC40A subfamily.

Its subcellular location is the membrane. May be involved in iron transport and iron homeostasis. This Oryza sativa subsp. japonica (Rice) protein is Solute carrier family 40 member 1.